We begin with the raw amino-acid sequence, 255 residues long: 5-oxoprolinase subunit A (255 aa).

The protein belongs to the LamB/PxpA family. In terms of assembly, forms a complex composed of PxpA, PxpB and PxpC.

The catalysed reaction is 5-oxo-L-proline + ATP + 2 H2O = L-glutamate + ADP + phosphate + H(+). In terms of biological role, catalyzes the cleavage of 5-oxoproline to form L-glutamate coupled to the hydrolysis of ATP to ADP and inorganic phosphate. The polypeptide is 5-oxoprolinase subunit A (Clostridium kluyveri (strain ATCC 8527 / DSM 555 / NBRC 12016 / NCIMB 10680 / K1)).